Here is a 292-residue protein sequence, read N- to C-terminus: Protein rogdi homolog (292 aa).

Residues 1-12 are compositionally biased toward polar residues; the sequence is MEVQSLTITTNY. Residues 1–25 form a disordered region; that stretch reads MEVQSLTITTNYPPKPASPNPQDIR.

Belongs to the rogdi family.

It is found in the nucleus envelope. This is Protein rogdi homolog from Caenorhabditis elegans.